The primary structure comprises 238 residues: Ribonuclease PH (238 aa).

Phosphate-binding positions include arginine 86 and 124 to 126 (GTR).

Belongs to the RNase PH family. As to quaternary structure, homohexameric ring arranged as a trimer of dimers.

It catalyses the reaction tRNA(n+1) + phosphate = tRNA(n) + a ribonucleoside 5'-diphosphate. Functionally, phosphorolytic 3'-5' exoribonuclease that plays an important role in tRNA 3'-end maturation. Removes nucleotide residues following the 3'-CCA terminus of tRNAs; can also add nucleotides to the ends of RNA molecules by using nucleoside diphosphates as substrates, but this may not be physiologically important. Probably plays a role in initiation of 16S rRNA degradation (leading to ribosome degradation) during starvation. This is Ribonuclease PH from Histophilus somni (strain 129Pt) (Haemophilus somnus).